Consider the following 734-residue polypeptide: Photosystem I P700 chlorophyll a apoprotein A2 (734 aa).

Transmembrane regions (helical) follow at residues Ile-46 to Ala-69, Leu-135 to Gln-158, Leu-175 to Ile-199, Ile-273 to Tyr-291, Ile-330 to Tyr-353, Ala-369 to Ile-395, Ala-417 to His-439, and Phe-517 to Val-535. Positions 559 and 568 each coordinate [4Fe-4S] cluster. Transmembrane regions (helical) follow at residues Ala-575–Trp-596 and Leu-643–Ile-665. His-654, Met-662, and Tyr-670 together coordinate chlorophyll a. Trp-671 is a phylloquinone binding site. Residues Leu-707–Ala-727 traverse the membrane as a helical segment.

It belongs to the PsaA/PsaB family. As to quaternary structure, the PsaA/B heterodimer binds the P700 chlorophyll special pair and subsequent electron acceptors. PSI consists of a core antenna complex that captures photons, and an electron transfer chain that converts photonic excitation into a charge separation. The eukaryotic PSI reaction center is composed of at least 11 subunits. It depends on P700 is a chlorophyll a/chlorophyll a' dimer, A0 is one or more chlorophyll a, A1 is one or both phylloquinones and FX is a shared 4Fe-4S iron-sulfur center. as a cofactor.

Its subcellular location is the plastid. The protein localises to the chloroplast thylakoid membrane. It catalyses the reaction reduced [plastocyanin] + hnu + oxidized [2Fe-2S]-[ferredoxin] = oxidized [plastocyanin] + reduced [2Fe-2S]-[ferredoxin]. In terms of biological role, psaA and PsaB bind P700, the primary electron donor of photosystem I (PSI), as well as the electron acceptors A0, A1 and FX. PSI is a plastocyanin-ferredoxin oxidoreductase, converting photonic excitation into a charge separation, which transfers an electron from the donor P700 chlorophyll pair to the spectroscopically characterized acceptors A0, A1, FX, FA and FB in turn. Oxidized P700 is reduced on the lumenal side of the thylakoid membrane by plastocyanin. In Nymphaea alba (White water-lily), this protein is Photosystem I P700 chlorophyll a apoprotein A2.